The chain runs to 847 residues: UPF0182 protein CYB_0372 (847 aa).

A run of 7 helical transmembrane segments spans residues 7-27, 51-71, 76-96, 141-161, 168-188, 220-240, and 259-279; these read GLFL…LAAF, WGLG…NICS, ATLA…AGSL, FNLV…ELGL, LALS…LFLI, LPAT…FWAL, and WASS…FGLL.

It belongs to the UPF0182 family.

The protein resides in the cell membrane. The protein is UPF0182 protein CYB_0372 of Synechococcus sp. (strain JA-2-3B'a(2-13)) (Cyanobacteria bacterium Yellowstone B-Prime).